Consider the following 312-residue polypeptide: Taste receptor type 2 member 9 (312 aa).

The Extracellular portion of the chain corresponds to 1–9; the sequence is MPSAIEAIY. Residues 10–32 form a helical membrane-spanning segment; sequence IILIAGELTIGIWGNGFIVLVNC. Topologically, residues 33-52 are cytoplasmic; that stretch reads IDWLKRRDVSLIDIILISLA. The helical transmembrane segment at 53-72 threads the bilayer; it reads ISRICLLXVISLDGFFMLLF. Topologically, residues 73 to 86 are extracellular; that stretch reads PTTYGNSVLVSIVB. The helical transmembrane segment at 87–109 threads the bilayer; it reads IVWTFANNSSLWFTSCLSIFYLL. At 110–128 the chain is on the cytoplasmic side; sequence KIANISHPFFFWLKLKINK. Residues 129–146 traverse the membrane as a helical segment; sequence VILAILLGSFLISLVISV. The Extracellular segment spans residues 147–180; that stretch reads XMNDDMWYHLFKVSHEENITWEFKVSKIPGTFKQ. Asn164 carries N-linked (GlcNAc...) asparagine glycosylation. A helical transmembrane segment spans residues 181–203; sequence LTLNLGAMVPFILCLISFSLLLF. Over 204 to 234 the chain is Cytoplasmic; it reads SLVRHTKQIQLXATGFRDPSTEAHMRAIKAV. A helical membrane pass occupies residues 235 to 257; sequence IIFLLLLIVYYPVFLVMTSSALI. At 258 to 261 the chain is on the extracellular side; the sequence is PQGK. A helical transmembrane segment spans residues 262 to 284; the sequence is LVLMIGDIVTITFPSSHSFILIM. Topologically, residues 285 to 312 are cytoplasmic; it reads GNSKLREAFLKMLRFVKRFLRRRKPFVP.

Belongs to the G-protein coupled receptor T2R family.

Its subcellular location is the membrane. Gustducin-coupled receptor implicated in the perception of bitter compounds in the oral cavity and the gastrointestinal tract. Signals through PLCB2 and the calcium-regulated cation channel TRPM5. This is Taste receptor type 2 member 9 (TAS2R9) from Pongo pygmaeus (Bornean orangutan).